A 321-amino-acid polypeptide reads, in one-letter code: LIMR family protein SELMODRAFT_432210 (321 aa).

5 helical membrane-spanning segments follow: residues 28–48 (KQLW…VIPF), 116–133 (CFSL…LDLW), 139–159 (LCVF…FGGV), 240–260 (LVFG…ILVF), and 284–304 (LLGT…VISG).

The protein belongs to the LIMR family.

It localises to the membrane. The polypeptide is LIMR family protein SELMODRAFT_432210 (Selaginella moellendorffii (Spikemoss)).